Consider the following 116-residue polypeptide: PTS system galactose-specific EIIA component (116 aa).

The region spanning 11-109 (DDYMGVVMGI…AVEVVGQERR (99 aa)) is the PTS EIIA type-3 domain. Histidine 85 serves as the catalytic Tele-phosphohistidine intermediate. Histidine 85 is subject to Phosphohistidine; by HPr. A Mg(2+)-binding site is contributed by aspartate 88.

In terms of assembly, homotrimer. It depends on Mg(2+) as a cofactor.

Its function is as follows. The phosphoenolpyruvate-dependent sugar phosphotransferase system (sugar PTS), a major carbohydrate active transport system, catalyzes the phosphorylation of incoming sugar substrates concomitantly with their translocation across the cell membrane. Involved in galactose transport with PtcB and Lmg_0963. The chain is PTS system galactose-specific EIIA component from Lactococcus lactis subsp. cremoris (strain MG1363).